Reading from the N-terminus, the 77-residue chain is Large ribosomal subunit protein bL28 (77 aa).

The protein belongs to the bacterial ribosomal protein bL28 family.

The protein is Large ribosomal subunit protein bL28 of Variovorax paradoxus (strain S110).